A 213-amino-acid chain; its full sequence is Phosphatidylcholine transfer protein (213 aa).

At methionine 1 the chain carries N-acetylmethionine. The START domain occupies methionine 1–lysine 212. The a 1,2-diacyl-sn-glycero-3-phosphocholine site is built by tyrosine 72 and arginine 78. Serine 139 bears the Phosphoserine mark. Position 157 (glutamine 157) interacts with a 1,2-diacyl-sn-glycero-3-phosphocholine. The part of the binding site for phosphatidylcholine stretch occupies residues valine 171–phenylalanine 176.

Interacts with ACOT13/THEM2.

It is found in the cytoplasm. Functionally, catalyzes the transfer of phosphatidylcholine between membranes. Binds phosphatidylcholine in a tight 1:1 stoichiometric complex. The protein is Phosphatidylcholine transfer protein (PCTP) of Bos taurus (Bovine).